Here is a 119-residue protein sequence, read N- to C-terminus: Chorion class B protein M2807 (119 aa).

Residues 1 to 11 (GGLGGGCGRGF) are left arm. The central domain stretch occupies residues 12–80 (SGGGLPVATA…GNGAVGITRE (69 aa)). Residues 81-119 (GGLGYGAGYGDGYGLGYGGYGGGYGLGYGGYGGCGCGCG) form a right arm (Gly-rich tandem repeats) region.

The protein belongs to the chorion protein family.

Functionally, this protein is one of many from the eggshell of the silk moth. This Bombyx mori (Silk moth) protein is Chorion class B protein M2807.